We begin with the raw amino-acid sequence, 179 residues long: Serglycin (179 aa).

Residues 1-26 (MRQVPVGTRLVLALAFVLVWGSSVQG) form the signal peptide. The propeptide at 27–75 (YPARRARYQWVRCKPDGIFANCIEEKGPRFDLIAEESNVGPPMTDPVLM) is activation peptide. An intrachain disulfide couples Cys-39 to Cys-48. Positions 86–145 (SDDYSGSGSGSGSGSGSGSGSGSGSGSGSGSGSGSGSGSGSGSGSGSGSGSGSLADMEWE) are disordered. Residues Ser-90 and Ser-92 are each glycosylated (O-linked (Xyl...) (glycosaminoglycan) serine). 24 tandem repeats follow at residues 90 to 91 (SG), 92 to 93 (SG), 94 to 95 (SG), 96 to 97 (SG), 98 to 99 (SG), 100 to 101 (SG), 102 to 103 (SG), 104 to 105 (SG), 106 to 107 (SG), 108 to 109 (SG), 110 to 111 (SG), 112 to 113 (SG), 114 to 115 (SG), 116 to 117 (SG), 118 to 119 (SG), 120 to 121 (SG), 122 to 123 (SG), 124 to 125 (SG), 126 to 127 (SG), 128 to 129 (SG), 130 to 131 (SG), 132 to 133 (SG), 134 to 135 (SG), and 136 to 137 (SG). Positions 90–137 (SGSGSGSGSGSGSGSGSGSGSGSGSGSGSGSGSGSGSGSGSGSGSGSG) are 24 X 2 AA tandem repeats of S-G. Over residues 92–136 (SGSGSGSGSGSGSGSGSGSGSGSGSGSGSGSGSGSGSGSGSGSGS) the composition is skewed to gly residues. 6 O-linked (Xyl...) (glycosaminoglycan) serine glycosylation sites follow: Ser-96, Ser-98, Ser-100, Ser-102, Ser-104, and Ser-106.

Belongs to the serglycin family. Binds to activated CD44 and to GZMB. In terms of processing, O-glycosylated; contains chondroitin sulfate and heparan sulfate.

Its subcellular location is the cytoplasmic granule. It localises to the cytolytic granule. The protein localises to the secreted. The protein resides in the extracellular space. It is found in the golgi apparatus. In terms of biological role, plays a role in formation of mast cell secretory granules and mediates storage of various compounds in secretory vesicles. Required for storage of some proteases in both connective tissue and mucosal mast cells and for storage of granzyme B in T-lymphocytes. Plays a role in localizing neutrophil elastase in azurophil granules of neutrophils. Mediates processing of MMP2. Plays a role in cytotoxic cell granule-mediated apoptosis by forming a complex with granzyme B which is delivered to cells by perforin to induce apoptosis. Regulates the secretion of TNF-alpha and may also regulate protease secretion. Inhibits bone mineralization. The polypeptide is Serglycin (Srgn) (Rattus norvegicus (Rat)).